The sequence spans 231 residues: Aquaporin Z (231 aa).

Transmembrane regions (helical) follow at residues 9 to 29 (CFGT…AAGF) and 34 to 54 (IGFA…AFAV). An NPA 1 motif is present at residues 63–65 (NPA). A run of 3 helical transmembrane segments spans residues 82–102 (VGYV…LYLI), 129–149 (YSML…LLVI), and 156–176 (FAPA…IHLI). Residues 186–188 (NPA) carry the NPA 2 motif. The helical transmembrane segment at 202 to 222 (LEQLWFFWVVPIVGGIIGGLI) threads the bilayer.

It belongs to the MIP/aquaporin (TC 1.A.8) family. Homotetramer.

It is found in the cell inner membrane. It catalyses the reaction H2O(in) = H2O(out). Its function is as follows. Channel that permits osmotically driven movement of water in both directions. It is involved in the osmoregulation and in the maintenance of cell turgor during volume expansion in rapidly growing cells. It mediates rapid entry or exit of water in response to abrupt changes in osmolarity. In Escherichia coli O6:H1 (strain CFT073 / ATCC 700928 / UPEC), this protein is Aquaporin Z.